The sequence spans 81 residues: Small ribosomal subunit protein bS16 (81 aa).

It belongs to the bacterial ribosomal protein bS16 family.

This Neisseria meningitidis serogroup C (strain 053442) protein is Small ribosomal subunit protein bS16.